The following is an 82-amino-acid chain: Small ribosomal subunit protein bS16 (82 aa).

It belongs to the bacterial ribosomal protein bS16 family.

This Alcanivorax borkumensis (strain ATCC 700651 / DSM 11573 / NCIMB 13689 / SK2) protein is Small ribosomal subunit protein bS16.